A 149-amino-acid polypeptide reads, in one-letter code: Putative pre-16S rRNA nuclease (149 aa).

Belongs to the YqgF nuclease family.

The protein localises to the cytoplasm. Its function is as follows. Could be a nuclease involved in processing of the 5'-end of pre-16S rRNA. This Cupriavidus metallidurans (strain ATCC 43123 / DSM 2839 / NBRC 102507 / CH34) (Ralstonia metallidurans) protein is Putative pre-16S rRNA nuclease.